Consider the following 381-residue polypeptide: MIISASTDYRAAAQRKLPPFLFHYIDGGAYAEYTLRRNVEDLSAIALRQRVLKNMSELSLETRLFDETLAMPVALAPVGLTGMYARRGEVQAARAAAAKGVPFTLSTVSVCPIEEVAPAIDRPMWFQLYVLKDRGFMRNALERAKAAGVTTLVFTVDMPVPGARYRDAHSGMSGPYAAPRRILQAMTHPAWAWDVGLLGKPHDLGNISAYRGNPTGLEDYIGWLGANFDPSIAWKDLEWIREFWDGPMVIKGILDPEDARDAVKFGADGIVVSNHGGRQLDGVLSSARALPAIADAVKGELAILADSGIRTGLDVVRMIALGADSVLLGRAFVYALAAAGEAGVRNLLELIEKEMRVAMVLTGAKSIGEISADSLVRELGA.

An FMN hydroxy acid dehydrogenase domain is found at 1 to 380 (MIISASTDYR…SADSLVRELG (380 aa)). Y24 contacts substrate. FMN is bound by residues S106 and Q127. Y129 is a substrate binding site. T155 is a binding site for FMN. A substrate-binding site is contributed by R164. Position 251 (K251) interacts with FMN. The active-site Proton acceptor is the H275. Residue R278 coordinates substrate. 306 to 330 (DSGIRTGLDVVRMIALGADSVLLGR) is a binding site for FMN.

The protein belongs to the FMN-dependent alpha-hydroxy acid dehydrogenase family. Homotetramer. FMN is required as a cofactor.

It is found in the cell inner membrane. The enzyme catalyses (S)-lactate + A = pyruvate + AH2. Catalyzes the conversion of L-lactate to pyruvate. Is coupled to the respiratory chain. In Pseudomonas aeruginosa (strain UCBPP-PA14), this protein is L-lactate dehydrogenase.